The primary structure comprises 254 residues: HLA class II histocompatibility antigen, DQ alpha 1 chain (254 aa).

An N-terminal signal peptide occupies residues 1 to 23; that stretch reads MILNKALMLGALALTTVMSPCGG. The tract at residues 24-119 is alpha-1; that stretch reads EDIVADHVAS…EVPEVTVFSK (96 aa). The Extracellular portion of the chain corresponds to 24–216; that stretch reads EDIVADHVAS…IPAPMSELTE (193 aa). N-linked (GlcNAc...) asparagine glycans are attached at residues Asn103 and Asn143. The Ig-like C1-type domain occupies 112–204; it reads PEVTVFSKSP…LDKPLLKHWE (93 aa). The tract at residues 120–203 is alpha-2; that stretch reads SPVTLGQPNI…GLDKPLLKHW (84 aa). Residues Cys132 and Cys188 are joined by a disulfide bond. The interval 204–216 is connecting peptide; sequence EPEIPAPMSELTE. A helical membrane pass occupies residues 217 to 239; sequence TVVCALGLSVGLVGIVVGTVFII. At 240–254 the chain is on the cytoplasmic side; sequence RGLRSVGASRHQGPL.

Belongs to the MHC class II family. In terms of assembly, heterodimer of an alpha and a beta subunit; also referred as MHC class II molecule. In the endoplasmic reticulum (ER) it forms a heterononamer; 3 MHC class II molecules bind to a CD74 homotrimer (also known as invariant chain or HLA class II histocompatibility antigen gamma chain). In the endosomal/lysosomal system; CD74 undergoes sequential degradation by various proteases; leaving a small fragment termed CLIP on each MHC class II molecule. MHC class II molecule interacts with HLA_DM, and HLA_DO in B-cells, in order to release CLIP and facilitate the binding of antigenic peptides.

The protein localises to the cell membrane. Its subcellular location is the endoplasmic reticulum membrane. It is found in the golgi apparatus. It localises to the trans-Golgi network membrane. The protein resides in the endosome membrane. The protein localises to the lysosome membrane. Binds peptides derived from antigens that access the endocytic route of antigen presenting cells (APC) and presents them on the cell surface for recognition by the CD4 T-cells. The peptide binding cleft accommodates peptides of 10-30 residues. The peptides presented by MHC class II molecules are generated mostly by degradation of proteins that access the endocytic route, where they are processed by lysosomal proteases and other hydrolases. Exogenous antigens that have been endocytosed by the APC are thus readily available for presentation via MHC II molecules, and for this reason this antigen presentation pathway is usually referred to as exogenous. As membrane proteins on their way to degradation in lysosomes as part of their normal turn-over are also contained in the endosomal/lysosomal compartments, exogenous antigens must compete with those derived from endogenous components. Autophagy is also a source of endogenous peptides, autophagosomes constitutively fuse with MHC class II loading compartments. In addition to APCs, other cells of the gastrointestinal tract, such as epithelial cells, express MHC class II molecules and CD74 and act as APCs, which is an unusual trait of the GI tract. To produce a MHC class II molecule that presents an antigen, three MHC class II molecules (heterodimers of an alpha and a beta chain) associate with a CD74 trimer in the ER to form a heterononamer. Soon after the entry of this complex into the endosomal/lysosomal system where antigen processing occurs, CD74 undergoes a sequential degradation by various proteases, including CTSS and CTSL, leaving a small fragment termed CLIP (class-II-associated invariant chain peptide). The removal of CLIP is facilitated by HLA-DM via direct binding to the alpha-beta-CLIP complex so that CLIP is released. HLA-DM stabilizes MHC class II molecules until primary high affinity antigenic peptides are bound. The MHC II molecule bound to a peptide is then transported to the cell membrane surface. In B-cells, the interaction between HLA-DM and MHC class II molecules is regulated by HLA-DO. Primary dendritic cells (DCs) also to express HLA-DO. Lysosomal microenvironment has been implicated in the regulation of antigen loading into MHC II molecules, increased acidification produces increased proteolysis and efficient peptide loading. The protein is HLA class II histocompatibility antigen, DQ alpha 1 chain (HLA-DQA1) of Homo sapiens (Human).